A 385-amino-acid polypeptide reads, in one-letter code: 1-deoxy-D-xylulose 5-phosphate reductoisomerase 1 (385 aa).

NADPH-binding residues include threonine 11, glycine 12, serine 13, isoleucine 14, asparagine 39, and asparagine 122. Lysine 123 is a 1-deoxy-D-xylulose 5-phosphate binding site. Residue glutamate 124 participates in NADPH binding. A Mn(2+)-binding site is contributed by aspartate 148. 1-deoxy-D-xylulose 5-phosphate is bound by residues serine 149, glutamate 150, serine 174, and histidine 197. Mn(2+) is bound at residue glutamate 150. Position 203 (glycine 203) interacts with NADPH. 4 residues coordinate 1-deoxy-D-xylulose 5-phosphate: serine 210, asparagine 215, lysine 216, and glutamate 219. Glutamate 219 is a binding site for Mn(2+).

It belongs to the DXR family. Mg(2+) is required as a cofactor. Mn(2+) serves as cofactor.

The catalysed reaction is 2-C-methyl-D-erythritol 4-phosphate + NADP(+) = 1-deoxy-D-xylulose 5-phosphate + NADPH + H(+). It participates in isoprenoid biosynthesis; isopentenyl diphosphate biosynthesis via DXP pathway; isopentenyl diphosphate from 1-deoxy-D-xylulose 5-phosphate: step 1/6. Catalyzes the NADPH-dependent rearrangement and reduction of 1-deoxy-D-xylulose-5-phosphate (DXP) to 2-C-methyl-D-erythritol 4-phosphate (MEP). This Bacillus anthracis protein is 1-deoxy-D-xylulose 5-phosphate reductoisomerase 1.